Here is a 327-residue protein sequence, read N- to C-terminus: GrpE protein homolog 2, mitochondrial (327 aa).

The transit peptide at 1–39 (MLVLRILSRVTRNAGIRSSLSAVTLPARNQTPVFSSRFH) directs the protein to the mitochondrion. The tract at residues 68–140 (SSSTSPESDE…DSESDDDELS (73 aa)) is disordered. 2 stretches are compositionally biased toward basic and acidic residues: residues 75-93 (SDEK…EKPT) and 103-113 (SESKDSVTDSA). Residues 130-140 (SDSESDDDELS) are compositionally biased toward acidic residues.

The protein belongs to the GrpE family. As to quaternary structure, probable component of the PAM complex, at least composed of SSC1 (mtHsp70), MGE1, TIM44, PAM16/TIM16, PAM17 and PAM18/TIM14. Interacts with SSQ1.

Its subcellular location is the mitochondrion matrix. Functionally, essential component of the PAM complex, a complex required for the translocation of transit peptide-containing proteins from the inner membrane into the mitochondrial matrix in an ATP-dependent manner. Seems to control the nucleotide-dependent binding of mitochondrial HSP70 to substrate proteins. Binds ATP. Interacts with copper ions Cu(2+). Confers thermotolerance to long-term exposure at moderately high temperature (TMHT at 35 degrees Celsius). The polypeptide is GrpE protein homolog 2, mitochondrial (Arabidopsis thaliana (Mouse-ear cress)).